The chain runs to 222 residues: Charged multivesicular body protein 4b (222 aa).

2 disordered regions span residues 1–21 (MSLIGKLFGTGGKGAKGPSPQ) and 177–222 (NLLE…WATA). Residues 21-182 (QEAIQKLRDT…ELDKNLLEVQ (162 aa)) adopt a coiled-coil conformation.

This sequence belongs to the SNF7 family. As to quaternary structure, probable core component of the endosomal sorting required for transport complex III (ESCRT-III). ESCRT-III components are thought to multimerize to form a flat lattice on the perimeter membrane of the endosome.

The protein resides in the cytoplasm. It is found in the cytosol. Its subcellular location is the late endosome membrane. The protein localises to the midbody. Functionally, probable core component of the endosomal sorting required for transport complex III (ESCRT-III) which is involved in multivesicular bodies (MVBs) formation and sorting of endosomal cargo proteins into MVBs. MVBs contain intraluminal vesicles (ILVs) that are generated by invagination and scission from the limiting membrane of the endosome and mostly are delivered to lysosomes enabling degradation of membrane proteins, such as stimulated growth factor receptors, lysosomal enzymes and lipids. The polypeptide is Charged multivesicular body protein 4b (chmp4b) (Xenopus laevis (African clawed frog)).